The sequence spans 348 residues: Protein RecA (348 aa).

64–71 contributes to the ATP binding site; it reads GPESSGKT. The interval 328–348 is disordered; the sequence is DTGGAAPAQEDEAQAQEELEF. Acidic residues predominate over residues 336-348; sequence QEDEAQAQEELEF.

This sequence belongs to the RecA family.

The protein resides in the cytoplasm. Can catalyze the hydrolysis of ATP in the presence of single-stranded DNA, the ATP-dependent uptake of single-stranded DNA by duplex DNA, and the ATP-dependent hybridization of homologous single-stranded DNAs. It interacts with LexA causing its activation and leading to its autocatalytic cleavage. The chain is Protein RecA from Bacillus licheniformis (strain ATCC 14580 / DSM 13 / JCM 2505 / CCUG 7422 / NBRC 12200 / NCIMB 9375 / NCTC 10341 / NRRL NRS-1264 / Gibson 46).